Here is a 1013-residue protein sequence, read N- to C-terminus: NHS-like protein 3 (1013 aa).

Lysine 17 carries the phosphoserine modification. The disordered stretch occupies residues 20-195 (SAKAESDNRQ…PPGSRDAVRI (176 aa)). Residues 73–89 (QHQERQKLSKGGWDHGD) are compositionally biased toward basic and acidic residues. 2 stretches are compositionally biased toward polar residues: residues 90–99 (TQSIQSSQTG) and 106–120 (SIYS…SSTA). Serine 92 carries the phosphoserine modification. Tyrosine 108 is modified (phosphotyrosine). Phosphoserine is present on residues serine 136, serine 143, and serine 159. Threonine 160 bears the Phosphothreonine mark. Positions 168 to 178 (VQKELGLRNNR) are enriched in basic and acidic residues. Phosphoserine is present on serine 213. Arginine 318 carries the asymmetric dimethylarginine modification. Phosphoserine occurs at positions 320, 325, 328, 336, 337, 339, and 340. The segment at 330-1013 (RSLGRFSSAS…PGSDPQKKLV (684 aa)) is disordered. The segment covering 336–361 (SSASSPRPRSRNASSSSDNWSHSQSS) has biased composition (low complexity). Residues 362 to 375 (ETIVSDGSTLSSKG) are compositionally biased toward polar residues. Phosphoserine is present on residues serine 398, serine 402, and serine 407. Residues 408 to 427 (TAETSDTASIRSSGQLSGRS) are compositionally biased toward polar residues. Low complexity-rich tracts occupy residues 484 to 493 (VGAVSCPPSS) and 515 to 530 (RTLS…SGTP). Phosphothreonine is present on threonine 529. Serine 543 is subject to Phosphoserine. Over residues 564-577 (SVSSSLTSLCSSSS) the composition is skewed to low complexity. The residue at position 591 (threonine 591) is a Phosphothreonine. Residues 600–614 (PPHPKVPAPFSPPPS) are compositionally biased toward pro residues. Serine 610 carries the phosphoserine modification. The segment covering 615-633 (KSKSSNQAAPVLAAPAVAP) has biased composition (low complexity). The segment covering 635-657 (QVSTIDTSPASPSMPQTTLTPAQ) has biased composition (polar residues). Residues serine 667 and serine 671 each carry the phosphoserine modification. Pro residues-rich tracts occupy residues 668-683 (PPPS…PPPT) and 706-716 (PSWPPPPPPAP). The span at 779 to 795 (PQKDSVGKHSGAPREDS) shows a compositional bias: basic and acidic residues. The span at 814–829 (GASTGIPNPSPGSSAP) shows a compositional bias: polar residues. 3 positions are modified to phosphoserine: serine 838, serine 842, and serine 848. Positions 859 to 873 (ASSLAASESPASALP) are enriched in low complexity. A phosphoserine mark is found at serine 909, serine 952, and serine 959. The segment covering 942–961 (KAPPPVARKPSVGVPPPSPS) has biased composition (pro residues). The span at 964–975 (RTESLTAPSTNG) shows a compositional bias: polar residues.

Functionally, able to directly activate the TNF-NFkappaB signaling pathway. The polypeptide is NHS-like protein 3 (Nhsl3) (Mus musculus (Mouse)).